Reading from the N-terminus, the 183-residue chain is Holliday junction branch migration complex subunit RuvA (183 aa).

The domain I stretch occupies residues 1–64 (MVVGIEGIIT…EDSNKFYGFL (64 aa)). The tract at residues 65–139 (DKDEQKMFEM…DTRTKLENVS (75 aa)) is domain II. Serine 139 is a region of interest (flexible linker). Positions 139–183 (SDDKSEALAALLTLGFKQEKIISVLASAQATGTSELIKEALKKLR) are domain III.

This sequence belongs to the RuvA family. In terms of assembly, homotetramer. Forms an RuvA(8)-RuvB(12)-Holliday junction (HJ) complex. HJ DNA is sandwiched between 2 RuvA tetramers; dsDNA enters through RuvA and exits via RuvB. An RuvB hexamer assembles on each DNA strand where it exits the tetramer. Each RuvB hexamer is contacted by two RuvA subunits (via domain III) on 2 adjacent RuvB subunits; this complex drives branch migration. In the full resolvosome a probable DNA-RuvA(4)-RuvB(12)-RuvC(2) complex forms which resolves the HJ.

It localises to the cytoplasm. The RuvA-RuvB-RuvC complex processes Holliday junction (HJ) DNA during genetic recombination and DNA repair, while the RuvA-RuvB complex plays an important role in the rescue of blocked DNA replication forks via replication fork reversal (RFR). RuvA specifically binds to HJ cruciform DNA, conferring on it an open structure. The RuvB hexamer acts as an ATP-dependent pump, pulling dsDNA into and through the RuvAB complex. HJ branch migration allows RuvC to scan DNA until it finds its consensus sequence, where it cleaves and resolves the cruciform DNA. The polypeptide is Holliday junction branch migration complex subunit RuvA (Campylobacter jejuni subsp. doylei (strain ATCC BAA-1458 / RM4099 / 269.97)).